A 426-amino-acid chain; its full sequence is Serine--tRNA ligase (426 aa).

230-232 (TAE) contacts L-serine. 261–263 (RSE) contacts ATP. Glu284 is a binding site for L-serine. 348–351 (EISS) is an ATP binding site. An L-serine-binding site is contributed by Ser384.

It belongs to the class-II aminoacyl-tRNA synthetase family. Type-1 seryl-tRNA synthetase subfamily. Homodimer. The tRNA molecule binds across the dimer.

It is found in the cytoplasm. It catalyses the reaction tRNA(Ser) + L-serine + ATP = L-seryl-tRNA(Ser) + AMP + diphosphate + H(+). The catalysed reaction is tRNA(Sec) + L-serine + ATP = L-seryl-tRNA(Sec) + AMP + diphosphate + H(+). Its pathway is aminoacyl-tRNA biosynthesis; selenocysteinyl-tRNA(Sec) biosynthesis; L-seryl-tRNA(Sec) from L-serine and tRNA(Sec): step 1/1. Catalyzes the attachment of serine to tRNA(Ser). Is also able to aminoacylate tRNA(Sec) with serine, to form the misacylated tRNA L-seryl-tRNA(Sec), which will be further converted into selenocysteinyl-tRNA(Sec). In Streptococcus mutans serotype c (strain ATCC 700610 / UA159), this protein is Serine--tRNA ligase.